A 329-amino-acid chain; its full sequence is Diaminopimelate epimerase (329 aa).

2 residues coordinate substrate: Asn-14 and Asn-73. Cys-82 (proton donor) is an active-site residue. Substrate contacts are provided by residues 83-84, Asn-170, Asn-206, and 224-225; these read GN and ER. Catalysis depends on Cys-233, which acts as the Proton acceptor. 234-235 provides a ligand contact to substrate; the sequence is GT.

It belongs to the diaminopimelate epimerase family. As to quaternary structure, homodimer.

It localises to the cytoplasm. The enzyme catalyses (2S,6S)-2,6-diaminopimelate = meso-2,6-diaminopimelate. Its pathway is amino-acid biosynthesis; L-lysine biosynthesis via DAP pathway; DL-2,6-diaminopimelate from LL-2,6-diaminopimelate: step 1/1. Catalyzes the stereoinversion of LL-2,6-diaminopimelate (L,L-DAP) to meso-diaminopimelate (meso-DAP), a precursor of L-lysine and an essential component of the bacterial peptidoglycan. The sequence is that of Diaminopimelate epimerase from Listeria monocytogenes serotype 4b (strain F2365).